Here is a 317-residue protein sequence, read N- to C-terminus: tRNA dimethylallyltransferase (317 aa).

Position 19–26 (19–26 (GPTASGKS)) interacts with ATP. 21–26 (TASGKS) contacts substrate. Residues 44-47 (DSMQ) are interaction with substrate tRNA.

This sequence belongs to the IPP transferase family. Monomer. It depends on Mg(2+) as a cofactor.

It carries out the reaction adenosine(37) in tRNA + dimethylallyl diphosphate = N(6)-dimethylallyladenosine(37) in tRNA + diphosphate. In terms of biological role, catalyzes the transfer of a dimethylallyl group onto the adenine at position 37 in tRNAs that read codons beginning with uridine, leading to the formation of N6-(dimethylallyl)adenosine (i(6)A). The protein is tRNA dimethylallyltransferase of Methylorubrum extorquens (strain PA1) (Methylobacterium extorquens).